The chain runs to 215 residues: Leucyl/phenylalanyl-tRNA--protein transferase (215 aa).

This sequence belongs to the L/F-transferase family.

The protein localises to the cytoplasm. It catalyses the reaction N-terminal L-lysyl-[protein] + L-leucyl-tRNA(Leu) = N-terminal L-leucyl-L-lysyl-[protein] + tRNA(Leu) + H(+). It carries out the reaction N-terminal L-arginyl-[protein] + L-leucyl-tRNA(Leu) = N-terminal L-leucyl-L-arginyl-[protein] + tRNA(Leu) + H(+). The enzyme catalyses L-phenylalanyl-tRNA(Phe) + an N-terminal L-alpha-aminoacyl-[protein] = an N-terminal L-phenylalanyl-L-alpha-aminoacyl-[protein] + tRNA(Phe). In terms of biological role, functions in the N-end rule pathway of protein degradation where it conjugates Leu, Phe and, less efficiently, Met from aminoacyl-tRNAs to the N-termini of proteins containing an N-terminal arginine or lysine. The chain is Leucyl/phenylalanyl-tRNA--protein transferase from Campylobacter jejuni subsp. jejuni serotype O:6 (strain 81116 / NCTC 11828).